A 190-amino-acid polypeptide reads, in one-letter code: Xanthine phosphoribosyltransferase (190 aa).

Positions 20 and 27 each coordinate xanthine. 128–132 is a 5-phospho-alpha-D-ribose 1-diphosphate binding site; the sequence is ANGKA. Lysine 156 is a xanthine binding site.

It belongs to the purine/pyrimidine phosphoribosyltransferase family. Xpt subfamily. In terms of assembly, homodimer.

It is found in the cytoplasm. It carries out the reaction XMP + diphosphate = xanthine + 5-phospho-alpha-D-ribose 1-diphosphate. It participates in purine metabolism; XMP biosynthesis via salvage pathway; XMP from xanthine: step 1/1. Functionally, converts the preformed base xanthine, a product of nucleic acid breakdown, to xanthosine 5'-monophosphate (XMP), so it can be reused for RNA or DNA synthesis. The polypeptide is Xanthine phosphoribosyltransferase (Pseudomonas putida (strain ATCC 700007 / DSM 6899 / JCM 31910 / BCRC 17059 / LMG 24140 / F1)).